Here is a 288-residue protein sequence, read N- to C-terminus: 2-dehydro-3-deoxyphosphooctonate aldolase (288 aa).

It belongs to the KdsA family.

It is found in the cytoplasm. It catalyses the reaction D-arabinose 5-phosphate + phosphoenolpyruvate + H2O = 3-deoxy-alpha-D-manno-2-octulosonate-8-phosphate + phosphate. It participates in carbohydrate biosynthesis; 3-deoxy-D-manno-octulosonate biosynthesis; 3-deoxy-D-manno-octulosonate from D-ribulose 5-phosphate: step 2/3. It functions in the pathway bacterial outer membrane biogenesis; lipopolysaccharide biosynthesis. The chain is 2-dehydro-3-deoxyphosphooctonate aldolase from Bdellovibrio bacteriovorus (strain ATCC 15356 / DSM 50701 / NCIMB 9529 / HD100).